The following is a 423-amino-acid chain: Putative competence-damage inducible protein (423 aa).

The protein belongs to the CinA family.

This Streptococcus uberis (strain ATCC BAA-854 / 0140J) protein is Putative competence-damage inducible protein.